The following is a 227-amino-acid chain: Ureidoacrylate amidohydrolase RutB (227 aa).

Asp-22 (proton acceptor) is an active-site residue. The active site involves Lys-131. Cys-164 (nucleophile) is an active-site residue.

The protein belongs to the isochorismatase family. RutB subfamily.

It catalyses the reaction (Z)-3-ureidoacrylate + H2O + H(+) = (Z)-3-aminoacrylate + NH4(+) + CO2. It carries out the reaction (Z)-3-ureidoacrylate + H2O = (Z)-3-aminoacrylate + carbamate + H(+). The enzyme catalyses (Z)-2-methylureidoacrylate + H2O + H(+) = (Z)-2-methylaminoacrylate + NH4(+) + CO2. Hydrolyzes ureidoacrylate to form aminoacrylate and carbamate. The carbamate hydrolyzes spontaneously, thereby releasing one of the nitrogen atoms of the pyrimidine ring as ammonia and one of its carbon atoms as CO2. This is Ureidoacrylate amidohydrolase RutB from Azorhizobium caulinodans (strain ATCC 43989 / DSM 5975 / JCM 20966 / LMG 6465 / NBRC 14845 / NCIMB 13405 / ORS 571).